The sequence spans 155 residues: Large ribosomal subunit protein uL30 (155 aa).

It belongs to the universal ribosomal protein uL30 family. As to quaternary structure, part of the 50S ribosomal subunit.

The chain is Large ribosomal subunit protein uL30 from Pyrococcus abyssi (strain GE5 / Orsay).